Reading from the N-terminus, the 162-residue chain is Shikimate kinase (162 aa).

11-16 (GSGKSS) serves as a coordination point for ATP. A Mg(2+)-binding site is contributed by serine 15. Positions 33, 57, and 80 each coordinate substrate. Arginine 116 lines the ATP pocket. Residue arginine 132 coordinates substrate.

Belongs to the shikimate kinase family. In terms of assembly, monomer. It depends on Mg(2+) as a cofactor.

It localises to the cytoplasm. The enzyme catalyses shikimate + ATP = 3-phosphoshikimate + ADP + H(+). Its pathway is metabolic intermediate biosynthesis; chorismate biosynthesis; chorismate from D-erythrose 4-phosphate and phosphoenolpyruvate: step 5/7. Its function is as follows. Catalyzes the specific phosphorylation of the 3-hydroxyl group of shikimic acid using ATP as a cosubstrate. The sequence is that of Shikimate kinase from Helicobacter acinonychis (strain Sheeba).